The sequence spans 369 residues: Homoserine O-acetyltransferase (369 aa).

Positions 44-350 (NAILVAHAWT…AYGHDAFLLE (307 aa)) constitute an AB hydrolase-1 domain. The Nucleophile role is filled by S150. A substrate-binding site is contributed by R217. Active-site residues include D311 and H344. D345 serves as a coordination point for substrate.

Belongs to the AB hydrolase superfamily. MetX family. As to quaternary structure, homodimer.

The protein resides in the cytoplasm. It carries out the reaction L-homoserine + acetyl-CoA = O-acetyl-L-homoserine + CoA. It functions in the pathway amino-acid biosynthesis; L-methionine biosynthesis via de novo pathway; O-acetyl-L-homoserine from L-homoserine: step 1/1. Transfers an acetyl group from acetyl-CoA to L-homoserine, forming acetyl-L-homoserine. In Geobacter metallireducens (strain ATCC 53774 / DSM 7210 / GS-15), this protein is Homoserine O-acetyltransferase.